A 177-amino-acid polypeptide reads, in one-letter code: Ribosome maturation factor RimM (177 aa).

Residues 98–171 enclose the PRC barrel domain; it reads GETIFLSEIK…AVVMDLPEGL (74 aa).

It belongs to the RimM family. As to quaternary structure, binds ribosomal protein uS19.

It localises to the cytoplasm. Functionally, an accessory protein needed during the final step in the assembly of 30S ribosomal subunit, possibly for assembly of the head region. Essential for efficient processing of 16S rRNA. May be needed both before and after RbfA during the maturation of 16S rRNA. It has affinity for free ribosomal 30S subunits but not for 70S ribosomes. The chain is Ribosome maturation factor RimM from Bdellovibrio bacteriovorus (strain ATCC 15356 / DSM 50701 / NCIMB 9529 / HD100).